The primary structure comprises 194 residues: Protein GrpE (194 aa).

The segment at 1–39 (MTNHEQDQQDNSELLDDDQVTLESQQAADSGAEAPASDD) is disordered. The span at 8 to 20 (QQDNSELLDDDQV) shows a compositional bias: acidic residues.

This sequence belongs to the GrpE family. Homodimer.

It localises to the cytoplasm. Its function is as follows. Participates actively in the response to hyperosmotic and heat shock by preventing the aggregation of stress-denatured proteins, in association with DnaK and GrpE. It is the nucleotide exchange factor for DnaK and may function as a thermosensor. Unfolded proteins bind initially to DnaJ; upon interaction with the DnaJ-bound protein, DnaK hydrolyzes its bound ATP, resulting in the formation of a stable complex. GrpE releases ADP from DnaK; ATP binding to DnaK triggers the release of the substrate protein, thus completing the reaction cycle. Several rounds of ATP-dependent interactions between DnaJ, DnaK and GrpE are required for fully efficient folding. This is Protein GrpE from Saccharophagus degradans (strain 2-40 / ATCC 43961 / DSM 17024).